The chain runs to 642 residues: MDSVSFEDVAVNFTLEEWALLDSSQKKLYEDVMQETFKNLVCLGKKWEDQDIEDDHRNQGRNRRCHMVERLCESRKGSKCGETTSQMPNVNINKETFTGAKPHECSFCGRDFMHHSSLNRHMRSHTGQKPNEYQECEKQPRKHKAVEKTFSYHHCFRKHERTHTRVKPYECKQCGKAFIYYQPFQRHERTHAGEKPYECKQCGKTFIYYQSFQQHAHTGKKPYECKQCGKAFICYQSFQRHERTHTGEKPYECKQCGKAFSCPTYFRTHERTHTGEKPYKCKECGKAFSFLSSFRRHKRTHSGEKPYECKECGKAFFYSASFRAHVITHTGARPYKCKECGKAFNSSNSCRVHERTHIGEKPYECKQCGKSFSWSISLRLHERTHTGEKPYECKQCHKTFSFSSSLREHETTHTGEKPYECKQCGKTFSFSSSLQRHERTHNAEKPYECKQCGKAFRCSSYFRIHERSHTGEKPYECKQCGKVFIRSSSFRLHERTHTGEKPYECKLCSKTFSFSSSLREHEKIHTGNKPFECKQCGKAFLRSSQIRLHERTHTGEKPYQCKQCGKAFISSSKFRMHERTHTGEKPYRCKQCGKAFRFSSSVRIHERSHTGEKPYECKQCGKAFISSSHFRLHERTHMGEKV.

The KRAB domain occupies 4 to 76; that stretch reads VSFEDVAVNF…MVERLCESRK (73 aa). The C2H2-type 1 zinc-finger motif lies at 103–125; the sequence is HECSFCGRDFMHHSSLNRHMRSH. A C2H2-type 2; degenerate zinc finger spans residues 141–163; that stretch reads RKHKAVEKTFSYHHCFRKHERTH. Residues 169–191 form a C2H2-type 3 zinc finger; it reads YECKQCGKAFIYYQPFQRHERTH. A C2H2-type 4; atypical zinc finger spans residues 197–217; sequence YECKQCGKTFIYYQSFQQHAH. 15 C2H2-type zinc fingers span residues 223 to 245, 251 to 273, 279 to 301, 307 to 329, 335 to 357, 363 to 385, 391 to 413, 419 to 441, 447 to 469, 475 to 497, 503 to 525, 531 to 553, 559 to 581, 587 to 609, and 615 to 637; these read YECKQCGKAFICYQSFQRHERTH, YECKQCGKAFSCPTYFRTHERTH, YKCKECGKAFSFLSSFRRHKRTH, YECKECGKAFFYSASFRAHVITH, YKCKECGKAFNSSNSCRVHERTH, YECKQCGKSFSWSISLRLHERTH, YECKQCHKTFSFSSSLREHETTH, YECKQCGKTFSFSSSLQRHERTH, YECKQCGKAFRCSSYFRIHERSH, YECKQCGKVFIRSSSFRLHERTH, YECKLCSKTFSFSSSLREHEKIH, FECKQCGKAFLRSSQIRLHERTH, YQCKQCGKAFISSSKFRMHERTH, YRCKQCGKAFRFSSSVRIHERSH, and YECKQCGKAFISSSHFRLHERTH.

Belongs to the krueppel C2H2-type zinc-finger protein family.

It is found in the nucleus. Functionally, may be involved in transcriptional regulation. This chain is Zinc finger protein 14 (ZNF14), found in Pongo abelii (Sumatran orangutan).